The chain runs to 83 residues: MNKETQPIDRETLLKEANKIIREHEDTLAGIEATGVTQRNGVLVFTGDYFLDEQGLPTAKSTAVFNMFKHLAHVLSEKYHLVD.

This is Protein YciN (yciN) from Escherichia coli O157:H7.